The primary structure comprises 594 residues: E3 ubiquitin-protein ligase TRAF7 (594 aa).

The segment at 1–33 (MPPINTPRRSDSAISVRSLHSESSMSLRSTFSL) is disordered. A phosphoserine mark is found at Ser12 and Ser15. A compositionally biased stretch (low complexity) spans 15-29 (SVRSLHSESSMSLRS). An RING-type zinc finger spans residues 55–89 (CQLCCSVFKDPVITTCGHTFCRRCALKSEKCPVDN). A TRAF-type zinc finger spans residues 146-216 (HESSCDYRPV…RFEGLKEFLQ (71 aa)). WD repeat units follow at residues 318–357 (GHQG…KCQK), 361–398 (GHDG…KVNT), 401–437 (AHDN…LKLK), 439–478 (ELTG…CIHV), 481–518 (TSGG…QVRT), 521–562 (GHVG…CTQT), and 565–593 (RHQG…KVWT).

It belongs to the WD repeat TRAF7 family. Homodimer. Interacts with MAP3K3 and promotes the kinase activity of this enzyme. Phosphorylated by MAP3K3. In terms of processing, ubiquitinates itself upon phosphorylation. As to expression, ubiquitously expressed. Expression is relatively high in heart, liver, kidney, testis, prostate, thyroid, and salivary gland.

It localises to the cytoplasmic vesicle. It is found in the cytoplasm. The protein localises to the nucleus. It catalyses the reaction S-ubiquitinyl-[E2 ubiquitin-conjugating enzyme]-L-cysteine + [acceptor protein]-L-lysine = [E2 ubiquitin-conjugating enzyme]-L-cysteine + N(6)-ubiquitinyl-[acceptor protein]-L-lysine.. It functions in the pathway protein modification; protein ubiquitination. E3 ubiquitin and SUMO-protein ligase that plays a role in different biological processes such as innate immunity, inflammation or apoptosis. Potentiates MAP3K3-mediated activation of the NF-kappa-B, JUN/AP1 and DDIT3 transcriptional regulators. Negatively regulates MYB transcriptional activity by sequestering it to the cytosol via SUMOylation. Plays a role in the phosphorylation of MAPK1 and/or MAPK3, probably via its interaction with MAP3K3. Negatively regulates RLR-mediated innate immunity by promoting 'Lys-48'-linked ubiquitination of TBK1 through its RING domain to inhibit the cellular antiviral response. Promotes 'Lys-29'-linked polyubiquitination of NEMO/IKBKG and RELA leading to targeting these two proteins to lysosomal degradative pathways, reducing the transcriptional activity of NF-kappa-B. This chain is E3 ubiquitin-protein ligase TRAF7, found in Mus musculus (Mouse).